The following is a 377-amino-acid chain: Probable purine permease 22 (377 aa).

10 helical membrane-spanning segments follow: residues 39–59 (WLRVSIYAIFVIFCQPLATVL), 71–91 (TYVVTLLQLIGFPVLILFRFF), 107–127 (SPSFTTLASVYLCTGLLVSAY), 128–148 (AYLSAVGLLYLPVSTFSLILA), 166–186 (FTPLIVNSLFLLTVSSALLVV), 202–222 (VIGFICTIGASAGIGLVLSLI), 238–258 (VLDLANYQSLVATCVVLIGLF), 283–303 (TLASAAIFWQVYTVGCVGLIF), 309–329 (FSNSITAVGLPIVPVVAVIVF), and 338–358 (IFSIILAIWGFLSFVYQHYLD).

Belongs to the purine permeases (TC 2.A.7.14) family.

It is found in the membrane. The polypeptide is Probable purine permease 22 (PUP22) (Arabidopsis thaliana (Mouse-ear cress)).